Consider the following 421-residue polypeptide: Signal recognition particle receptor FtsY (421 aa).

Residues 228-235, 309-313, and 373-376 each bind GTP; these read GINGAGKT, DTAGR, and TKLD.

It belongs to the GTP-binding SRP family. FtsY subfamily. Part of the signal recognition particle protein translocation system, which is composed of SRP and FtsY. SRP is a ribonucleoprotein composed of Ffh and a 4.5S RNA molecule.

Its subcellular location is the cell inner membrane. It is found in the cytoplasm. It carries out the reaction GTP + H2O = GDP + phosphate + H(+). Involved in targeting and insertion of nascent membrane proteins into the cytoplasmic membrane. Acts as a receptor for the complex formed by the signal recognition particle (SRP) and the ribosome-nascent chain (RNC). Interaction with SRP-RNC leads to the transfer of the RNC complex to the Sec translocase for insertion into the membrane, the hydrolysis of GTP by both Ffh and FtsY, and the dissociation of the SRP-FtsY complex into the individual components. The protein is Signal recognition particle receptor FtsY of Neisseria meningitidis serogroup B (strain ATCC BAA-335 / MC58).